We begin with the raw amino-acid sequence, 365 residues long: Putative agmatine deiminase (365 aa).

Residue cysteine 357 is the Amidino-cysteine intermediate of the active site.

It belongs to the agmatine deiminase family.

It catalyses the reaction agmatine + H2O = N-carbamoylputrescine + NH4(+). In Yersinia pseudotuberculosis serotype O:1b (strain IP 31758), this protein is Putative agmatine deiminase.